Here is a 190-residue protein sequence, read N- to C-terminus: Vespryn-21 (190 aa).

Residues 1–20 (MLLFTLCFFADLENGGKALA) form the signal peptide. Residues 21–127 (SPPGKWQKAD…LIWQRGLWFL (107 aa)) enclose the B30.2/SPRY domain. Positions 128 to 190 (QRLETDSDKL…LGGGVSLTNL (63 aa)) are excised as a propeptide.

The protein belongs to the ohanin/vespryn family. As to expression, expressed by the venom gland.

The protein localises to the secreted. In terms of biological role, neurotoxin that produces dose-dependent hypolocomotion and hyperalgesia in mice. May directly act on the central nervous system, as it is 6500-fold more potent when administered intracerebroventricularly than intraperitoneal. The polypeptide is Vespryn-21 (Drysdalia coronoides (White-lipped snake)).